The primary structure comprises 93 residues: Large ribosomal subunit protein uL23 (93 aa).

Belongs to the universal ribosomal protein uL23 family. In terms of assembly, part of the 50S ribosomal subunit. Contacts protein L29, and trigger factor when it is bound to the ribosome.

Its function is as follows. One of the early assembly proteins it binds 23S rRNA. One of the proteins that surrounds the polypeptide exit tunnel on the outside of the ribosome. Forms the main docking site for trigger factor binding to the ribosome. The protein is Large ribosomal subunit protein uL23 of Campylobacter lari (strain RM2100 / D67 / ATCC BAA-1060).